The primary structure comprises 605 residues: Putative glutaminase 2 (605 aa).

Substrate contacts are provided by Ser213, Asn262, Glu308, Asn315, Tyr342, Tyr394, and Val412. ANK repeat units follow at residues 480 to 509 (DRLIPVFHVARAGDLPTMRRLYMQGEDLNT) and 513 to 543 (DDRTVLHIAATEGYETMIKFLVNVAKVDVDK). The span at 569 to 581 (KAMKRPEQHRKDS) shows a compositional bias: basic and acidic residues. The segment at 569–605 (KAMKRPEQHRKDSVSSLDTDDEIDDDGFPEKPSFTID) is disordered. The span at 586-595 (DTDDEIDDDG) shows a compositional bias: acidic residues.

The protein belongs to the glutaminase family.

It catalyses the reaction L-glutamine + H2O = L-glutamate + NH4(+). The protein is Putative glutaminase 2 (glna-2) of Caenorhabditis elegans.